The primary structure comprises 562 residues: MTTTTTVKSDIEIAQEASMKKIQEIAAELNILEDELEPYGHYKGKLSLDIFKRLQNEEDGKVVLVTAINPTPAGEGKSTVTVGLGQAFNKIGKKTVIALREPSLGPTMGLKGGAAGGGFSQVVPMEDINLHFTGDIHAITTANNALAAFIDNHIQQGNTLGIDTRKIVWKRCVDLNDRALRNVVIGLGGPVQGVPREDGFDITVASEIMAVFCLATDIQDLKARLSRIVVAYNFANQPVTVKDLGVEGALTLLLKDALKPNLVQTLENTPAIIHGGPFANIAHGCNSVIATTMAAKLGDYVITEAGFGADLGAEKFLDIKARAAGIKPEAVVIVATIRALKMHGGVAKDQLKEENVDALAKGMENLQKHVETIQSFGVPFVIAINKFITDTDAEVAYLQEWCNERGYAVSLTEVWEKGGQGGVDLAEKVLKEIEKGENNYAPLYELELPLEEKIRTIAQKVYGAKDIEFAPKARKQLAQYEGEGWSNLPICMAKTQYSLSDDATKLGRPSDFIVTIRELKPSIGAGFIVALTGTMLTMPGLPKQPAALQMDVNEDGKAVGLF.

T71–S78 serves as a coordination point for ATP.

Belongs to the formate--tetrahydrofolate ligase family.

It catalyses the reaction (6S)-5,6,7,8-tetrahydrofolate + formate + ATP = (6R)-10-formyltetrahydrofolate + ADP + phosphate. Its pathway is one-carbon metabolism; tetrahydrofolate interconversion. The chain is Formate--tetrahydrofolate ligase from Bacillus cereus (strain AH187).